The sequence spans 64 residues: Movement protein TGBp3 (64 aa).

Residues 1–4 (MRSV) lie on the Lumenal side of the membrane. A helical transmembrane segment spans residues 5-27 (ALTLCAIIAGYLLVSNLQNVFSP). Residues 28–64 (EVCTLVITGESIRINGCNLSPAHFRAISHLKVLQIHL) are Cytoplasmic-facing.

The protein belongs to the Tymovirales TGBp3 protein family.

The protein resides in the host endoplasmic reticulum membrane. Plays a role in viral cell-to-cell propagation, by facilitating genome transport to neighboring plant cells through plasmosdesmata. May induce the formation of granular vesicles derived from the Endoplasmic reticulum, which align on actin filaments. In Lily symptomless virus (LSV), this protein is Movement protein TGBp3.